The following is a 93-amino-acid chain: Signal recognition particle 19 kDa protein (93 aa).

It belongs to the SRP19 family. Part of the signal recognition particle protein translocation system, which is composed of SRP and FtsY. Archaeal SRP consists of a 7S RNA molecule of 300 nucleotides and two protein subunits: SRP54 and SRP19.

Its subcellular location is the cytoplasm. In terms of biological role, involved in targeting and insertion of nascent membrane proteins into the cytoplasmic membrane. Binds directly to 7S RNA and mediates binding of the 54 kDa subunit of the SRP. The protein is Signal recognition particle 19 kDa protein of Haloquadratum walsbyi (strain DSM 16790 / HBSQ001).